Reading from the N-terminus, the 204-residue chain is Outer-membrane lipoprotein carrier protein (204 aa).

A signal peptide spans 1 to 21; it reads MKKLLVACCVVSGMMSASVLA.

The protein belongs to the LolA family. In terms of assembly, monomer.

The protein localises to the periplasm. In terms of biological role, participates in the translocation of lipoproteins from the inner membrane to the outer membrane. Only forms a complex with a lipoprotein if the residue after the N-terminal Cys is not an aspartate (The Asp acts as a targeting signal to indicate that the lipoprotein should stay in the inner membrane). The chain is Outer-membrane lipoprotein carrier protein from Edwardsiella ictaluri (strain 93-146).